Consider the following 354-residue polypeptide: Protein RecA (354 aa).

Position 67–74 (67–74 (GPESSGKT)) interacts with ATP. The disordered stretch occupies residues 331 to 354 (NQDSTPDFSVDDNGEGVKETNEDF). Basic and acidic residues predominate over residues 345–354 (EGVKETNEDF).

The protein belongs to the RecA family.

Its subcellular location is the cytoplasm. Its function is as follows. Can catalyze the hydrolysis of ATP in the presence of single-stranded DNA, the ATP-dependent uptake of single-stranded DNA by duplex DNA, and the ATP-dependent hybridization of homologous single-stranded DNAs. It interacts with LexA causing its activation and leading to its autocatalytic cleavage. This chain is Protein RecA, found in Citrobacter koseri (strain ATCC BAA-895 / CDC 4225-83 / SGSC4696).